The chain runs to 341 residues: MDHRELWPYGLRVLVIDDDCSYLSVMEDLLLKCSYKVTTYKNVREAVPFILDNPQIVDLVISDAFFPTEDGLLILQEVTSKFGIPTVIMASSGDTNTVMKYVANGAFDFLLKPVRIEELSNIWQHIFRKQMQDHKNNNMVGNLEKPGHPPSILAMARATPATTRSTATEASLAPLENEVRDDMVNYNGEITDIRDLGKSRLTWTTQLHRQFIAAVNHLGEDKAVPKKILGIMKVKHLTREQVASHLQKYRMQLKKSIPTTSKHGATLSSTALDKTQDHPSRSQYFNQDGCKEIMDYSLPRDDLSSGSECMLEELNDYSSEGFQDFRWDSDKQEYGPCFWNF.

Positions 12–127 constitute a Response regulatory domain; the sequence is RVLVIDDDCS…ELSNIWQHIF (116 aa). Asp-63 bears the 4-aspartylphosphate mark. In terms of domain architecture, HTH myb-type spans 195–254; it reads DLGKSRLTWTTQLHRQFIAAVNHLGEDKAVPKKILGIMKVKHLTREQVASHLQKYRMQLK. A DNA-binding region (H-T-H motif) is located at residues 225-250; that stretch reads PKKILGIMKVKHLTREQVASHLQKYR.

It belongs to the ARR family. Type-B subfamily. Post-translationally, two-component system major event consists of a His-to-Asp phosphorelay between a sensor histidine kinase (HK) and a response regulator (RR). In plants, the His-to-Asp phosphorelay involves an additional intermediate named Histidine-containing phosphotransfer protein (HPt). This multistep phosphorelay consists of a His-Asp-His-Asp sequential transfer of a phosphate group between first a His and an Asp of the HK protein, followed by the transfer to a conserved His of the HPt protein and finally the transfer to an Asp in the receiver domain of the RR protein.

The protein localises to the nucleus. Its function is as follows. Transcriptional activator that acts as a floral inducer to promote short-day (SD) flowering pathway. Activates HD3A and other FT-like genes independently from HD1. May also activate MADS-box transcription factors involved in flowering regulation. Functions as a response regulator involved in His-to-Asp phosphorelay signal transduction system. Phosphorylation of the Asp residue in the receiver domain activates the ability of the protein to promote the transcription of target genes. May directly activate some type-A response regulators in response to cytokinins. This chain is Two-component response regulator ORR30, found in Oryza sativa subsp. japonica (Rice).